The chain runs to 240 residues: Adenosylcobinamide-GDP ribazoletransferase (240 aa).

Helical transmembrane passes span 31–51 (LLYY…ASHL), 62–81 (ALLL…DGLA), 109–129 (IAVV…WVLV), 133–153 (IGAQ…GLFL), and 179–199 (VLLV…LLAL).

This sequence belongs to the CobS family. Requires Mg(2+) as cofactor.

Its subcellular location is the cell inner membrane. It carries out the reaction alpha-ribazole + adenosylcob(III)inamide-GDP = adenosylcob(III)alamin + GMP + H(+). The enzyme catalyses alpha-ribazole 5'-phosphate + adenosylcob(III)inamide-GDP = adenosylcob(III)alamin 5'-phosphate + GMP + H(+). It functions in the pathway cofactor biosynthesis; adenosylcobalamin biosynthesis; adenosylcobalamin from cob(II)yrinate a,c-diamide: step 7/7. Its function is as follows. Joins adenosylcobinamide-GDP and alpha-ribazole to generate adenosylcobalamin (Ado-cobalamin). Also synthesizes adenosylcobalamin 5'-phosphate from adenosylcobinamide-GDP and alpha-ribazole 5'-phosphate. The chain is Adenosylcobinamide-GDP ribazoletransferase from Pseudomonas putida (strain ATCC 700007 / DSM 6899 / JCM 31910 / BCRC 17059 / LMG 24140 / F1).